Consider the following 106-residue polypeptide: Small ribosomal subunit protein uS10 (106 aa).

The protein belongs to the universal ribosomal protein uS10 family. Part of the 30S ribosomal subunit.

Involved in the binding of tRNA to the ribosomes. This Pyrobaculum aerophilum (strain ATCC 51768 / DSM 7523 / JCM 9630 / CIP 104966 / NBRC 100827 / IM2) protein is Small ribosomal subunit protein uS10.